We begin with the raw amino-acid sequence, 126 residues long: NADH-quinone oxidoreductase subunit A (126 aa).

The next 3 helical transmembrane spans lie at 16–36 (ILVLLAMAIGLGLILIAAAAI), 73–93 (ILFIIFDLEVAFLFPWAVAFG), and 95–115 (MSMTAFWSMMVFLSVLTVGFA).

It belongs to the complex I subunit 3 family. In terms of assembly, NDH-1 is composed of 14 different subunits. Subunits NuoA, H, J, K, L, M, N constitute the membrane sector of the complex.

The protein localises to the cell inner membrane. The catalysed reaction is a quinone + NADH + 5 H(+)(in) = a quinol + NAD(+) + 4 H(+)(out). Functionally, NDH-1 shuttles electrons from NADH, via FMN and iron-sulfur (Fe-S) centers, to quinones in the respiratory chain. The immediate electron acceptor for the enzyme in this species is believed to be ubiquinone. Couples the redox reaction to proton translocation (for every two electrons transferred, four hydrogen ions are translocated across the cytoplasmic membrane), and thus conserves the redox energy in a proton gradient. This Rhodobacter capsulatus (Rhodopseudomonas capsulata) protein is NADH-quinone oxidoreductase subunit A.